The chain runs to 611 residues: Protein Spindly-A (611 aa).

A coiled-coil region spans residues 1–390 (MEESETVLKL…KENEKIKDEL (390 aa)). The segment at 487–611 (TCTAESTDGR…PNATTQCPQQ (125 aa)) is disordered. The span at 493–511 (TDGRIHSKEDLSLSTKEQD) shows a compositional bias: basic and acidic residues. Over residues 552-567 (HNCSVTSASPRSTSED) the composition is skewed to polar residues. A compositionally biased stretch (basic and acidic residues) spans 570-583 (SESKRFDEEQEKRK). Residues 602 to 611 (PNATTQCPQQ) are compositionally biased toward polar residues.

It belongs to the Spindly family.

It localises to the chromosome. It is found in the centromere. The protein localises to the kinetochore. In terms of biological role, required for the localization of dynein and dynactin to the mitotic kintochore. Dynein is believed to control the initial lateral interaction between the kinetochore and spindle microtubules and to facilitate the subsequent formation of end-on kinetochore-microtubule attachments mediated by the NDC80 complex. The chain is Protein Spindly-A (spdl1-a) from Xenopus laevis (African clawed frog).